The chain runs to 102 residues: NADH-quinone oxidoreductase subunit K 1 (102 aa).

Transmembrane regions (helical) follow at residues 5–25, 30–50, and 62–82; these read LYEV…CVVA, VIMM…TFVG, and VFSL…LAMV.

This sequence belongs to the complex I subunit 4L family. As to quaternary structure, NDH-1 is composed of 14 different subunits. Subunits NuoA, H, J, K, L, M, N constitute the membrane sector of the complex.

The protein localises to the cell inner membrane. The catalysed reaction is a quinone + NADH + 5 H(+)(in) = a quinol + NAD(+) + 4 H(+)(out). In terms of biological role, NDH-1 shuttles electrons from NADH, via FMN and iron-sulfur (Fe-S) centers, to quinones in the respiratory chain. The immediate electron acceptor for the enzyme in this species is believed to be ubiquinone. Couples the redox reaction to proton translocation (for every two electrons transferred, four hydrogen ions are translocated across the cytoplasmic membrane), and thus conserves the redox energy in a proton gradient. This Citrifermentans bemidjiense (strain ATCC BAA-1014 / DSM 16622 / JCM 12645 / Bem) (Geobacter bemidjiensis) protein is NADH-quinone oxidoreductase subunit K 1.